A 356-amino-acid chain; its full sequence is Peptide chain release factor 1 (356 aa).

N5-methylglutamine is present on Gln233.

Belongs to the prokaryotic/mitochondrial release factor family. Post-translationally, methylated by PrmC. Methylation increases the termination efficiency of RF1.

The protein localises to the cytoplasm. In terms of biological role, peptide chain release factor 1 directs the termination of translation in response to the peptide chain termination codons UAG and UAA. This is Peptide chain release factor 1 from Bacillus licheniformis (strain ATCC 14580 / DSM 13 / JCM 2505 / CCUG 7422 / NBRC 12200 / NCIMB 9375 / NCTC 10341 / NRRL NRS-1264 / Gibson 46).